The following is a 199-amino-acid chain: Transgelin-2 (199 aa).

Ala-2 carries the N-acetylalanine modification. Ser-11 carries the post-translational modification Phosphoserine. Lys-17 and Lys-20 each carry N6-acetyllysine. The region spanning Ala-24 to Ala-136 is the Calponin-homology (CH) domain. At Ser-163 the chain carries Phosphoserine. Residue Lys-171 forms a Glycyl lysine isopeptide (Lys-Gly) (interchain with G-Cter in SUMO2) linkage. The stretch at Ile-174–Leu-199 is one Calponin-like repeat. Thr-180 is subject to Phosphothreonine. An omega-N-methylarginine mark is found at Arg-182 and Arg-196.

Belongs to the calponin family. Expressed in epididymis (at protein level).

This chain is Transgelin-2 (TAGLN2), found in Homo sapiens (Human).